Here is a 722-residue protein sequence, read N- to C-terminus: Lysophospholipid acyltransferase 6 (722 aa).

5 consecutive transmembrane segments (helical) span residues 25–45, 62–84, 104–123, 180–200, and 243–263; these read MVGL…ALFL, LRHT…QQAI, IVQR…VHLM, ALEY…PLVF, and KVVG…IYPV. Active-site residues include N349 and H381. 3 helical membrane-spanning segments follow: residues 378 to 398, 424 to 444, and 452 to 472; these read AVWH…AVVV, ILTC…FVLL, and LYLR…FILP. 2 stretches are compositionally biased toward polar residues: residues 485–511 and 549–570; these read NGNG…STAA and VEQP…QQQP. Disordered stretches follow at residues 485-582 and 650-687; these read NGNG…PTCA and NGAI…DLHP.

It belongs to the membrane-bound acyltransferase family.

It is found in the endoplasmic reticulum. Its subcellular location is the membrane. The enzyme catalyses a 1-acyl-sn-glycero-3-phospho-L-serine + an acyl-CoA = a 1,2-diacyl-sn-glycero-3-phospho-L-serine + CoA. It carries out the reaction 1-(9Z-octadecenoyl)-sn-glycero-3-phospho-L-serine + (9Z)-hexadecenoyl-CoA = 1-(9Z-octadecenoyl)-2-(9Z-hexadecenoyl)-sn-glycero-3-phospho-L-serine + CoA. It catalyses the reaction 1-(9Z-octadecenoyl)-sn-glycero-3-phospho-L-serine + (9Z)-octadecenoyl-CoA = 1,2-di-(9Z)-octadecenoyl-sn-glycero-3-phospho-L-serine + CoA. The catalysed reaction is a 1-acyl-sn-glycero-3-phosphocholine + an acyl-CoA = a 1,2-diacyl-sn-glycero-3-phosphocholine + CoA. The enzyme catalyses 1-hexadecanoyl-sn-glycero-3-phosphocholine + (9Z)-octadecenoyl-CoA = 1-hexadecanoyl-2-(9Z-octadecenoyl)-sn-glycero-3-phosphocholine + CoA. It carries out the reaction (9Z)-hexadecenoyl-CoA + 1-hexadecanoyl-sn-glycero-3-phosphocholine = 1-hexadecanoyl-2-(9Z-hexadecenoyl)-sn-glycero-3-phosphocholine + CoA. It catalyses the reaction a 1-acyl-sn-glycero-3-phosphoethanolamine + an acyl-CoA = a 1,2-diacyl-sn-glycero-3-phosphoethanolamine + CoA. The catalysed reaction is 1-hexadecanoyl-sn-glycero-3-phosphoethanolamine + (9Z)-octadecenoyl-CoA = 1-hexadecanoyl-2-(9Z-octadecenoyl)-sn-glycero-3-phosphoethanolamine + CoA. The enzyme catalyses 1-hexadecanoyl-sn-glycero-3-phosphoethanolamine + (9Z,12Z)-octadecadienoyl-CoA = 1-hexadecanoyl-2-(9Z,12Z-octadecadienoyl)-sn-glycero-3-phosphoethanolamine + CoA. It carries out the reaction 1-hexadecanoyl-sn-glycero-3-phosphoethanolamine + (9Z)-hexadecenoyl-CoA = 1-hexadecanoyl-2-(9Z)-hexadecenoyl-sn-glycero-3-phosphoethanolamine + CoA. It catalyses the reaction 1-(9Z-octadecenoyl)-sn-glycero-3-phospho-(1'-sn-glycerol) + (9Z)-octadecenoyl-CoA = 1,2-di-(9Z-octadecenoyl)-sn-glycero-3-phospho-(1'-sn-glycerol) + CoA. It participates in lipid metabolism; phospholipid metabolism. Its function is as follows. Acyltransferase with broad-specificity, that mediates the acylation of lysophospholipids to produce phospholipids (glycerophospholipids). Converts lysophosphatidylserine (1-acyl-2-hydroxy-sn-glycero-3-phospho-L-serine or LPS) to phosphatidylserine (1,2-diacyl-sn-glycero-3-phospho-L-serine or PS) (LPSAT activity), lysophosphatidylcholine (1-acyl-sn-glycero-3-phosphocholine or LPC) to phosphatidylcholine (1,2-diacyl-sn-glycero-3-phosphocholine or PC) (LPCAT activity), also lysophosphatidylethanolamine (1-acyl-sn-glycero-3-phosphochethanolamine or LPE) to phosphatidylchethanolamine (LPEAT activity) and lysophosphatidylglycerol (1-acyl-2-hydroxy-sn-glycero-3-phospho-(1'-sn-glycerol) or LPG) to phosphatidylglycerol (1,2-diacyl-sn-glycero-3-phospho-(1'-sn-glycerol) or PG) (LPGAT activity). Has a preference for unsaturated fatty acids of at least 16 carbons such as oleoyl-CoA ((9Z)-octadecenoyl-CoA) and palmitoleoyl-CoA ((9Z)-hexadecenoyl-CoA). Glycerophospholipids are important structural and functional components of cellular membrane, acyl-chain remodeling regulates the molecular species distribution of glycerophospholipids which can affect membrane fluidity and curvature. Essential for fertility and viability together with Nessy protein (Nes). The protein is Lysophospholipid acyltransferase 6 of Drosophila melanogaster (Fruit fly).